Reading from the N-terminus, the 566-residue chain is E3 ubiquitin-protein ligase RNF220 (566 aa).

Lys-277 is covalently cross-linked (Glycyl lysine isopeptide (Lys-Gly) (interchain with G-Cter in SUMO2)). Residues 277 to 297 (KREGESPTASPHSSATDDLHH) are disordered. Residue Ser-390 is modified to Phosphoserine. A coiled-coil region spans residues 485 to 513 (EDSAVTTFEALKARVRELERQLSRGDRYK). Residues 514–522 (CLICMDSYS) are required for targeting to the cytoplasm. Residues 514–553 (CLICMDSYSMPLTSIQCWHVHCEECWLRTLGAKKLCPQCY) form an RING-type zinc finger.

Interacts with SIN3B. Interacts with CTNNB1 (via Armadillo repeats 2-8). Interacts with USP7 (via MATH domain). Auto-ubiquitinated; leads to proteasomal degradation.

It localises to the cytoplasm. It catalyses the reaction S-ubiquitinyl-[E2 ubiquitin-conjugating enzyme]-L-cysteine + [acceptor protein]-L-lysine = [E2 ubiquitin-conjugating enzyme]-L-cysteine + N(6)-ubiquitinyl-[acceptor protein]-L-lysine.. Its pathway is protein modification; protein ubiquitination. In terms of biological role, E3 ubiquitin-protein ligase that promotes the ubiquitination and proteasomal degradation of SIN3B. Independently of its E3 ligase activity, acts as a CTNNB1 stabilizer through USP7-mediated deubiquitination of CTNNB1 promoting Wnt signaling. In Bos taurus (Bovine), this protein is E3 ubiquitin-protein ligase RNF220 (RNF220).